A 154-amino-acid chain; its full sequence is Putative ankyrin repeat protein RBE_1220 (154 aa).

2 ANK repeats span residues 78–108 (EKVN…NVDQ) and 113–142 (NSRT…ILIL).

This chain is Putative ankyrin repeat protein RBE_1220, found in Rickettsia bellii (strain RML369-C).